Reading from the N-terminus, the 26-residue chain is Ribulose bisphosphate carboxylase large chain (26 aa).

The propeptide occupies Met1–Ser2. N-acetylproline is present on Pro3.

This sequence belongs to the RuBisCO large chain family. Type I subfamily. Heterohexadecamer of 8 large chains and 8 small chains.

The protein localises to the plastid. It localises to the chloroplast. The enzyme catalyses 2 (2R)-3-phosphoglycerate + 2 H(+) = D-ribulose 1,5-bisphosphate + CO2 + H2O. The catalysed reaction is D-ribulose 1,5-bisphosphate + O2 = 2-phosphoglycolate + (2R)-3-phosphoglycerate + 2 H(+). Its function is as follows. RuBisCO catalyzes two reactions: the carboxylation of D-ribulose 1,5-bisphosphate, the primary event in carbon dioxide fixation, as well as the oxidative fragmentation of the pentose substrate in the photorespiration process. Both reactions occur simultaneously and in competition at the same active site. The protein is Ribulose bisphosphate carboxylase large chain (rbcL) of Vicia faba (Broad bean).